A 233-amino-acid chain; its full sequence is MRARLSLLALLLIVGTAHAAYERARTNEREHMVEEQLISRDITDEATLAAMRTVPRHRFVPEDVRRSAYDDNPLPIGHGQTISQPYIVAYMTQAARLKRDSRVLEIGTGSGYQAAVLAELCDEVYSIEIVEPLAHQAAATLKETGYERVHLRIGDGYNGWPEAAPFDAILVTAGAEDVPPKLFEQLKEGGRLVIPVGPAHSTQFLKLVTKRNGKPHLHTLMPVRFVPFTREKP.

The active site involves S83.

This sequence belongs to the methyltransferase superfamily. L-isoaspartyl/D-aspartyl protein methyltransferase family.

Its subcellular location is the cytoplasm. The enzyme catalyses [protein]-L-isoaspartate + S-adenosyl-L-methionine = [protein]-L-isoaspartate alpha-methyl ester + S-adenosyl-L-homocysteine. Catalyzes the methyl esterification of L-isoaspartyl residues in peptides and proteins that result from spontaneous decomposition of normal L-aspartyl and L-asparaginyl residues. It plays a role in the repair and/or degradation of damaged proteins. This Opitutus terrae (strain DSM 11246 / JCM 15787 / PB90-1) protein is Protein-L-isoaspartate O-methyltransferase.